A 283-amino-acid polypeptide reads, in one-letter code: Bifunctional protein FolD (283 aa).

Residues 165–167 (GRG), T192, and V233 contribute to the NADP(+) site.

This sequence belongs to the tetrahydrofolate dehydrogenase/cyclohydrolase family. As to quaternary structure, homodimer.

The catalysed reaction is (6R)-5,10-methylene-5,6,7,8-tetrahydrofolate + NADP(+) = (6R)-5,10-methenyltetrahydrofolate + NADPH. It catalyses the reaction (6R)-5,10-methenyltetrahydrofolate + H2O = (6R)-10-formyltetrahydrofolate + H(+). The protein operates within one-carbon metabolism; tetrahydrofolate interconversion. In terms of biological role, catalyzes the oxidation of 5,10-methylenetetrahydrofolate to 5,10-methenyltetrahydrofolate and then the hydrolysis of 5,10-methenyltetrahydrofolate to 10-formyltetrahydrofolate. This Mycolicibacterium smegmatis (strain ATCC 700084 / mc(2)155) (Mycobacterium smegmatis) protein is Bifunctional protein FolD.